The sequence spans 133 residues: Acyl-CoA thioester hydrolase YciA (133 aa).

One can recognise a HotDog ACOT-type domain in the interval Pro8–Asp123.

Belongs to the acyl coenzyme A hydrolase family.

Catalyzes the hydrolysis of the thioester bond in palmitoyl-CoA and malonyl-CoA. The protein is Acyl-CoA thioester hydrolase YciA (yciA) of Salmonella typhi.